The following is a 104-amino-acid chain: Signal recognition particle 19 kDa protein (104 aa).

Belongs to the SRP19 family. As to quaternary structure, part of the signal recognition particle protein translocation system, which is composed of SRP and FtsY. Archaeal SRP consists of a 7S RNA molecule of 300 nucleotides and two protein subunits: SRP54 and SRP19.

Its subcellular location is the cytoplasm. Its function is as follows. Involved in targeting and insertion of nascent membrane proteins into the cytoplasmic membrane. Binds directly to 7S RNA and mediates binding of the 54 kDa subunit of the SRP. This Archaeoglobus fulgidus (strain ATCC 49558 / DSM 4304 / JCM 9628 / NBRC 100126 / VC-16) protein is Signal recognition particle 19 kDa protein.